Reading from the N-terminus, the 179-residue chain is Natural killer cells antigen CD94 (179 aa).

At 1-10 (MAVFKTTLWR) the chain is on the cytoplasmic side. A helical; Signal-anchor for type II membrane protein transmembrane segment spans residues 11-31 (LISGTLGIICLSLMATLGILL). Topologically, residues 32–179 (KNSFTKLSVE…NRYICKQQLI (148 aa)) are extracellular. Cystine bridges form between cysteine 58–cysteine 70 and cysteine 61–cysteine 72. A C-type lectin domain is found at 68-175 (YRCNCYFISS…CETKNRYICK (108 aa)). Residues asparagine 83 and asparagine 132 are each glycosylated (N-linked (GlcNAc...) asparagine). 2 cysteine pairs are disulfide-bonded: cysteine 89–cysteine 174 and cysteine 152–cysteine 166.

Can form disulfide-bonded heterodimer with NKG2 family members KLRC1 and KLRC2. KLRD1-KLRC1 heterodimer interacts with peptide-bound MHC-E-B2M heterotrimeric complex. KLRD1 plays a prominent role in directly interacting with MHC-E. KLRD1-KLRC1 interacts with much higher affinity with peptide-bound MHC-E-B2M than KLRD1-KLRC2. Interacts with the adapter protein TYROBP/DAP12; this interaction is required for cell surface expression and cell activation. In terms of tissue distribution, natural killer cells.

It is found in the cell membrane. Its function is as follows. Immune receptor involved in self-nonself discrimination. In complex with KLRC1 or KLRC2 on cytotoxic and regulatory lymphocyte subsets, recognizes non-classical major histocompatibility (MHC) class Ib molecule MHC-E loaded with self-peptides derived from the signal sequence of classical MHC class Ia and non-classical MHC class Ib molecules. Enables cytotoxic cells to monitor the expression of MHC class I molecules in healthy cells and to tolerate self. Primarily functions as a ligand binding subunit as it lacks the capacity to signal. Functionally, KLRD1-KLRC1 acts as an immune inhibitory receptor. Key inhibitory receptor on natural killer (NK) cells that regulates their activation and effector functions. Dominantly counteracts T cell receptor signaling on a subset of memory/effector CD8-positive T cells as part of an antigen-driven response to avoid autoimmunity. On intraepithelial CD8-positive gamma-delta regulatory T cells triggers TGFB1 secretion, which in turn limits the cytotoxic programming of intraepithelial CD8-positive alpha-beta T cells, distinguishing harmless from pathogenic antigens. In MHC-E-rich tumor microenvironment, acts as an immune inhibitory checkpoint and may contribute to progressive loss of effector functions of NK cells and tumor-specific T cells, a state known as cell exhaustion. Upon MHC-E-peptide binding, transmits intracellular signals through KLRC1 immunoreceptor tyrosine-based inhibition motifs (ITIMs) by recruiting INPP5D/SHIP-1 and INPPL1/SHIP-2 tyrosine phosphatases to ITIMs, and ultimately opposing signals transmitted by activating receptors through dephosphorylation of proximal signaling molecules. In terms of biological role, KLRD1-KLRC2 acts as an immune activating receptor. On cytotoxic lymphocyte subsets recognizes MHC-E loaded with signal sequence-derived peptides from non-classical MHC class Ib MHC-G molecules, likely playing a role in the generation and effector functions of adaptive NK cells and in maternal-fetal tolerance during pregnancy. Regulates the effector functions of terminally differentiated cytotoxic lymphocyte subsets, and in particular may play a role in adaptive NK cell response to viral infection. Upon MHC-E-peptide binding, transmits intracellular signals via the adapter protein TYROBP/DAP12, triggering the phosphorylation of proximal signaling molecules and cell activation. This chain is Natural killer cells antigen CD94 (KLRD1), found in Macaca mulatta (Rhesus macaque).